Here is a 394-residue protein sequence, read N- to C-terminus: Na(+)/H(+) antiporter NhaA (394 aa).

The next 11 helical transmembrane spans lie at 17–37 (ILLM…LAGV), 59–79 (LLLW…GLEV), 95–115 (SLPS…YLAF), 124–144 (VGWA…MALL), 154–174 (VFLL…IALF), 177–197 (TDLS…MVAL), 213–233 (FILW…GVII), 261–281 (FMIL…NMTL), 287–307 (PITL…VLLF), 328–348 (IIPV…IASL), and 363–383 (LGIL…LAKV).

This sequence belongs to the NhaA Na(+)/H(+) (TC 2.A.33) antiporter family.

The protein localises to the cell inner membrane. The catalysed reaction is Na(+)(in) + 2 H(+)(out) = Na(+)(out) + 2 H(+)(in). Its function is as follows. Na(+)/H(+) antiporter that extrudes sodium in exchange for external protons. This chain is Na(+)/H(+) antiporter NhaA, found in Shewanella frigidimarina (strain NCIMB 400).